A 223-amino-acid chain; its full sequence is Cytidylate kinase (223 aa).

The interval 1–23 is disordered; that stretch reads MSTSPLVIAIDGPSGSGKSSTSR. Residue 12 to 20 participates in ATP binding; that stretch reads GPSGSGKSS.

It belongs to the cytidylate kinase family. Type 1 subfamily.

The protein resides in the cytoplasm. The enzyme catalyses CMP + ATP = CDP + ADP. It catalyses the reaction dCMP + ATP = dCDP + ADP. The sequence is that of Cytidylate kinase from Cutibacterium acnes (strain DSM 16379 / KPA171202) (Propionibacterium acnes).